We begin with the raw amino-acid sequence, 228 residues long: Uracil-DNA glycosylase (228 aa).

Catalysis depends on aspartate 64, which acts as the Proton acceptor.

This sequence belongs to the uracil-DNA glycosylase (UDG) superfamily. UNG family.

The protein resides in the cytoplasm. It carries out the reaction Hydrolyzes single-stranded DNA or mismatched double-stranded DNA and polynucleotides, releasing free uracil.. Functionally, excises uracil residues from the DNA which can arise as a result of misincorporation of dUMP residues by DNA polymerase or due to deamination of cytosine. In Yersinia pseudotuberculosis serotype O:1b (strain IP 31758), this protein is Uracil-DNA glycosylase.